The chain runs to 227 residues: ATP-dependent Clp protease proteolytic subunit (227 aa).

The Nucleophile role is filled by serine 123. Histidine 148 is an active-site residue.

The protein belongs to the peptidase S14 family. As to quaternary structure, fourteen ClpP subunits assemble into 2 heptameric rings which stack back to back to give a disk-like structure with a central cavity, resembling the structure of eukaryotic proteasomes.

The protein resides in the cytoplasm. It catalyses the reaction Hydrolysis of proteins to small peptides in the presence of ATP and magnesium. alpha-casein is the usual test substrate. In the absence of ATP, only oligopeptides shorter than five residues are hydrolyzed (such as succinyl-Leu-Tyr-|-NHMec, and Leu-Tyr-Leu-|-Tyr-Trp, in which cleavage of the -Tyr-|-Leu- and -Tyr-|-Trp bonds also occurs).. Functionally, cleaves peptides in various proteins in a process that requires ATP hydrolysis. Has a chymotrypsin-like activity. Plays a major role in the degradation of misfolded proteins. This chain is ATP-dependent Clp protease proteolytic subunit, found in Chlorobium phaeobacteroides (strain DSM 266 / SMG 266 / 2430).